Here is an 875-residue protein sequence, read N- to C-terminus: Phospholipase DDHD1 (875 aa).

3 disordered regions span residues 1 to 30 (MNYP…LGSD), 101 to 153 (LRYY…GAAA), and 206 to 231 (RAQD…SVED). Phosphoserine occurs at positions 8 and 11. The segment covering 130–140 (SGGGGAAGGGP) has biased composition (gly residues). Residues 217 to 228 (GPASPAGPASSS) show a composition bias toward low complexity. S540 is an active-site residue. Residues 614–861 (LKFKVENFFC…ALFLLTFMYK (248 aa)) form the DDHD domain. S726 is subject to Phosphoserine. The tract at residues 770–804 (RSSASQPSETSRDSIEDEKKPVASPPMTTVATQTL) is disordered. Positions 779–790 (TSRDSIEDEKKP) are enriched in basic and acidic residues. Residues 795–804 (PMTTVATQTL) are compositionally biased toward polar residues.

This sequence belongs to the PA-PLA1 family. As to quaternary structure, forms homooligomers and, to a much smaller extent, heterooligomers with DDHD2. Interacts with SEC23A and SEC24C. Expressed in mature testis.

The protein localises to the cytoplasm. The catalysed reaction is a 1,2-diacyl-sn-glycero-3-phosphate + H2O = a 2-acyl-sn-glycerol 3-phosphate + a fatty acid + H(+). It catalyses the reaction a 1,2-diacyl-sn-glycero-3-phospho-(1D-myo-inositol) + H2O = a 2-acyl-sn-glycero-3-phospho-D-myo-inositol + a fatty acid + H(+). The enzyme catalyses 1-octadecanoyl-2-(5Z,8Z,11Z,14Z-eicosatetraenoyl)-sn-glycero-3-phospho-(1D-myo-inositol) + H2O = 2-(5Z,8Z,11Z,14Z-eicosatetraenoyl)-sn-glycero-3-phospho-(1D-myo-inositol) + octadecanoate + H(+). It carries out the reaction a 1-acyl-2-(5Z,8Z,11Z,14Z-eicosatetraenoyl)-sn-glycero-3-phospho-(1D-myo-inositol) + H2O = 2-(5Z,8Z,11Z,14Z-eicosatetraenoyl)-sn-glycero-3-phospho-(1D-myo-inositol) + a fatty acid + H(+). The catalysed reaction is 1,2-dihexadecanoyl-sn-glycero-3-phospho-(1D-myo-inositol) + H2O = 2-hexadecanoyl-sn-glycero-3-phospho-(1D-myo-inositol) + hexadecanoate + H(+). It catalyses the reaction 1,2-di-(9Z-octadecenoyl)-sn-glycero-3-phosphate + H2O = 2-(9Z-octadecenoyl)-sn-glycero-3-phosphate + (9Z)-octadecenoate + H(+). The enzyme catalyses a 1-acyl-2-(5Z,8Z,11Z,14Z)-eicosatetraenoyl-sn-glycero-3-phosphate + H2O = 2-(5Z,8Z,11Z,14Z-eicosatetraenoyl)-sn-glycero-3-phosphate + a fatty acid + H(+). It carries out the reaction 1-hexadecanoyl-2-(9Z-octadecenoyl)-sn-glycero-3-phosphate + H2O = 2-(9Z-octadecenoyl)-sn-glycero-3-phosphate + hexadecanoate + H(+). The catalysed reaction is 1-hexadecanoyl-2-(9Z-octadecenoyl)-sn-glycero-3-phospho-L-serine + H2O = 2-(9Z-octadecenoyl)-sn-glycero-3-phospho-L-serine + hexadecanoate + H(+). It catalyses the reaction 1,2-di-(5Z,8Z,11Z,14Z)-eicosatetraenoyl-sn-glycero-3-phosphate + H2O = 2-(5Z,8Z,11Z,14Z-eicosatetraenoyl)-sn-glycero-3-phosphate + (5Z,8Z,11Z,14Z)-eicosatetraenoate + H(+). The enzyme catalyses 1-octadecanoyl-2-(5Z,8Z,11Z,14Z-eicosatetraenoyl)-sn-glycero-3-phosphate + H2O = 2-(5Z,8Z,11Z,14Z-eicosatetraenoyl)-sn-glycero-3-phosphate + octadecanoate + H(+). It carries out the reaction a 1,2-diacyl-sn-glycero-3-phosphocholine + H2O = a 2-acyl-sn-glycero-3-phosphocholine + a fatty acid + H(+). The catalysed reaction is a 1,2-diacyl-sn-glycero-3-phosphoethanolamine + H2O = a 2-acyl-sn-glycero-3-phosphoethanolamine + a fatty acid + H(+). It catalyses the reaction a 1,2-diacyl-sn-glycero-3-phospho-L-serine + H2O = a 2-acyl-sn-glycero-3-phospho-L-serine + a fatty acid + H(+). The enzyme catalyses a 1,2-diacyl-sn-glycero-3-phospho-(1'-sn-glycerol) + H2O = 2-acyl-sn-glycero-3-phospho-(1'-sn-glycerol) + a fatty acid + H(+). It carries out the reaction 1-hexadecanoyl-2-(9Z-octadecenoyl)-sn-glycero-3-phospho-(1'-sn-glycerol) + H2O = 2-(9Z-octadecenoyl)-sn-glycero-3-phospho-(1'-sn-glycerol) + hexadecanoate + H(+). The catalysed reaction is 1-acyl-2-(5Z,8Z,11Z,14Z-eicosatetraenoyl)-sn-glycero-3-phosphocholine + H2O = 2-(5Z,8Z,11Z,14Z)-eicosatetraenoyl-sn-glycero-3-phosphocholine + a fatty acid + H(+). It catalyses the reaction 1-acyl-2-(5Z,8Z,11Z,14Z)-eicosatetraenoyl-sn-glycero-3-phosphoethanolamine + H2O = 2-(5Z,8Z,11Z,14Z)-eicosatetraenoyl-sn-glycero-3-phosphoethanolamine + a fatty acid + H(+). The enzyme catalyses 1-(9Z-octadecenoyl)-2-(7Z,10Z,13Z,16Z,19Z-docosapentaenoyl)-sn-glycero-3-phospho-1D-myo-inositol + H2O = 2-(7Z,10Z,13Z,16Z,19Z-docosapentaenoyl)-sn-glycero-3-phospho-1D-myo-inositol + (9Z)-octadecenoate + H(+). It carries out the reaction 1-(9Z-octadecenoyl)-2-(5Z,8Z,11Z,14Z-eicosatetraenoyl)-sn-glycero-3-phospho-1D-myo-inositol + H2O = 2-(5Z,8Z,11Z,14Z-eicosatetraenoyl)-sn-glycero-3-phospho-(1D-myo-inositol) + (9Z)-octadecenoate + H(+). The catalysed reaction is 1,2-di-(9Z-octadecenoyl)-sn-glycero-3-phospho-1D-myo-inositol + H2O = 2-(9Z-octadecenoyl)-sn-glycero-3-phospho-1D-myo-inositol + (9Z)-octadecenoate + H(+). It catalyses the reaction 1-(9Z-octadecenoyl)-2-(8Z,11Z,14Z-eicosatrienoyl)-sn-glycero-3-phospho-1D-myo-inositol + H2O = 2-(8Z,11Z,14Z-eicosatrienoyl)-sn-glycero-3-phospho-1D-myo-inositol + (9Z)-octadecenoate + H(+). The enzyme catalyses 1,2-di-(9Z-octadecenoyl)-sn-glycero-3-phosphocholine + H2O = (9Z-octadecenoyl)-sn-glycero-3-phosphocholine + (9Z)-octadecenoate + H(+). It functions in the pathway phospholipid metabolism; phosphatidylinositol metabolism. Its function is as follows. Phospholipase A1 (PLA1) that hydrolyzes ester bonds at the sn-1 position of glycerophospholipids producing a free fatty acid and a lysophospholipid. Prefers phosphatidate (1,2-diacyl-sn-glycero-3-phosphate, PA) as substrate in vitro, but can efficiently hydrolyze phosphatidylinositol (1,2-diacyl-sn-glycero-3-phospho-(1D-myo-inositol), PI), as well as a range of other glycerophospholipid substrates such as phosphatidylcholine (1,2-diacyl-sn-glycero-3-phosphocholine, PC), phosphatidylethanolamine (1,2-diacyl-sn-glycero-3-phosphoethanolamine, PE), phosphatidylserine (1,2-diacyl-sn-glycero-3-phospho-L-serine, PS) and phosphatidylglycerol (1,2-diacyl-sn-glycero-3-phospho-(1'-sn-glycerol), PG). Involved in the regulation of the endogenous content of polyunsaturated PI and PS lipids in the nervous system. Changes in these lipids extend to downstream metabolic products like PI phosphates PIP and PIP2, which play fundamental roles in cell biology. Regulates mitochondrial morphology. These dynamic changes may be due to PA hydrolysis at the mitochondrial surface. May play a regulatory role in spermatogenesis or sperm function. This chain is Phospholipase DDHD1 (DDHD1), found in Bos taurus (Bovine).